The chain runs to 295 residues: Bifunctional protein FolD (295 aa).

Residues 165-167 (GRS), Ser190, and Ile231 each bind NADP(+).

It belongs to the tetrahydrofolate dehydrogenase/cyclohydrolase family. As to quaternary structure, homodimer.

The enzyme catalyses (6R)-5,10-methylene-5,6,7,8-tetrahydrofolate + NADP(+) = (6R)-5,10-methenyltetrahydrofolate + NADPH. It catalyses the reaction (6R)-5,10-methenyltetrahydrofolate + H2O = (6R)-10-formyltetrahydrofolate + H(+). It functions in the pathway one-carbon metabolism; tetrahydrofolate interconversion. Catalyzes the oxidation of 5,10-methylenetetrahydrofolate to 5,10-methenyltetrahydrofolate and then the hydrolysis of 5,10-methenyltetrahydrofolate to 10-formyltetrahydrofolate. The chain is Bifunctional protein FolD from Nitrosomonas eutropha (strain DSM 101675 / C91 / Nm57).